A 227-amino-acid chain; its full sequence is Atypical response regulator protein ChxR (227 aa).

A Response regulatory domain is found at 6 to 108 (HVLLVSEHWD…ILKSAISLFL (103 aa)). The ompR/PhoB-type DNA-binding region spans 117–213 (PESIRFGPNV…LRGVGYLFSD (97 aa)).

In terms of assembly, homodimer.

Its function is as follows. May be a global positive regulator of transcription. Binds a cis-acting element of its own promoter DNA sequence and is hence probably also involved in its own transcription activation. The recognition sequence is 5'-WHGAWNH-N(3-5)-WHGAWNH-3', where W is A/T, H is C/A/T, N is G/C/A/T and the linker length in the middle is 3 to 5 nucleotides. In Chlamydia trachomatis serovar L2 (strain ATCC VR-902B / DSM 19102 / 434/Bu), this protein is Atypical response regulator protein ChxR.